Reading from the N-terminus, the 104-residue chain is Large ribosomal subunit protein uL24 (104 aa).

The protein belongs to the universal ribosomal protein uL24 family. In terms of assembly, part of the 50S ribosomal subunit.

One of two assembly initiator proteins, it binds directly to the 5'-end of the 23S rRNA, where it nucleates assembly of the 50S subunit. Its function is as follows. One of the proteins that surrounds the polypeptide exit tunnel on the outside of the subunit. The chain is Large ribosomal subunit protein uL24 from Shewanella pealeana (strain ATCC 700345 / ANG-SQ1).